A 344-amino-acid chain; its full sequence is MDVGSCNNHYFYDVDMKEDFYRCIAPSEDIWKKFELVPGFPLSPGGCPGGGGTDWGAELMDLGWESPMKLTGLSSVVLLRDCMWSGFSTRERLEKVIHERLTTASPRATNPQKPVADHENSEPGVNSIEQNANPLVVPTPVPEKVPNSSGSESTSDSEDDEIDVVTIEKRKSYGGRQPVTITVRADPTATKLFHISIHQQQHNYAARLPPEPNSMSPQPNFHSPIKEEPGEVTSPPALQQCSSPMPGSPLASGSSDSEDIVKKKNHNYLERKRRNDLRSRFLALREEVPSLTRSTKTPKVVVLSKATEFLKGLVIQEQQLTAEKFKLWSRHQQLLRRISHLKGR.

2 disordered regions span residues 100 to 162 (RLTT…DDEI) and 209 to 261 (PPEP…EDIV). 3 stretches are compositionally biased toward polar residues: residues 102-112 (TTASPRATNPQ), 123-133 (PGVNSIEQNAN), and 236-255 (PALQ…SGSS). Residues 261–313 (VKKKNHNYLERKRRNDLRSRFLALREEVPSLTRSTKTPKVVVLSKATEFLKGL) form the bHLH domain. Residues 313–341 (LVIQEQQLTAEKFKLWSRHQQLLRRISHL) are leucine-zipper.

In terms of assembly, efficient DNA binding requires dimerization with another bHLH protein. Binds DNA as a heterodimer with MAX. High levels in oocytes, modest levels in kidney and low levels in spleen.

It localises to the nucleus. This is Protein L-Myc-1-A (mycl1-a) from Xenopus laevis (African clawed frog).